The sequence spans 445 residues: Transcriptional enhancer factor TEF-4 (445 aa).

2 disordered regions span residues 1–47 (MGDP…VWSP) and 191–217 (PPAS…SPPA). Gly residues predominate over residues 25 to 37 (EGTGGSEGVGGDG). Positions 38–114 (SPDAEGVWSP…QVLARRKSRE (77 aa)) form a DNA-binding region, TEA. The tract at residues 172–445 (WNVPDVKPFS…QYHIYRLVRD (274 aa)) is transcriptional activation. Pro residues predominate over residues 199-216 (YEPPPALSPLPPPAPSPP).

Interacts with YAP1 and WWTR1/TAZ. Highest expression in brain. High levels also found in lung, testis and ovarian follicle cells. Lower levels in heart and spleen.

It is found in the nucleus. Functionally, transcription factor which plays a key role in the Hippo signaling pathway, a pathway involved in organ size control and tumor suppression by restricting proliferation and promoting apoptosis. The core of this pathway is composed of a kinase cascade wherein MST1/MST2, in complex with its regulatory protein SAV1, phosphorylates and activates LATS1/2 in complex with its regulatory protein MOB1, which in turn phosphorylates and inactivates YAP1 oncoprotein and WWTR1/TAZ. Acts by mediating gene expression of YAP1 and WWTR1/TAZ, thereby regulating cell proliferation, migration and epithelial mesenchymal transition (EMT) induction. Binds to the SPH and GT-IIC 'enhansons' (5'-GTGGAATGT-3'). May be involved in the gene regulation of neural development. Binds to the M-CAT motif. The chain is Transcriptional enhancer factor TEF-4 (Tead2) from Mus musculus (Mouse).